Reading from the N-terminus, the 101-residue chain is UPF0213 protein lp_2058 (101 aa).

The region spanning 15–92 is the GIY-YIG domain; the sequence is KKYYFYVLLC…KHQSRAAKLK (78 aa).

It belongs to the UPF0213 family.

This chain is UPF0213 protein lp_2058, found in Lactiplantibacillus plantarum (strain ATCC BAA-793 / NCIMB 8826 / WCFS1) (Lactobacillus plantarum).